The primary structure comprises 256 residues: Nickel import ATP-binding protein NikD (256 aa).

One can recognise an ABC transporter domain in the interval 6 to 245 (LEIRGLRIET…PASATARTLL (240 aa)). 38–45 (GASGSGKS) contacts ATP.

The protein belongs to the ABC transporter superfamily. Nickel importer (TC 3.A.1.5.3) family. As to quaternary structure, the complex is composed of two ATP-binding proteins (NikD and NikE), two transmembrane proteins (NikB and NikC) and a solute-binding protein (NikA).

Its subcellular location is the cell inner membrane. The catalysed reaction is Ni(2+)(out) + ATP + H2O = Ni(2+)(in) + ADP + phosphate + H(+). Its function is as follows. Part of the ABC transporter complex NikABCDE involved in nickel import. Responsible for energy coupling to the transport system. This Pseudomonas putida (strain ATCC 47054 / DSM 6125 / CFBP 8728 / NCIMB 11950 / KT2440) protein is Nickel import ATP-binding protein NikD.